The sequence spans 231 residues: 7-cyano-7-deazaguanine synthase (231 aa).

ATP is bound at residue 8–18 (FSGGQDSTTCL). Cysteine 188, cysteine 197, cysteine 200, and cysteine 203 together coordinate Zn(2+).

It belongs to the QueC family. The cofactor is Zn(2+).

It catalyses the reaction 7-carboxy-7-deazaguanine + NH4(+) + ATP = 7-cyano-7-deazaguanine + ADP + phosphate + H2O + H(+). Its pathway is purine metabolism; 7-cyano-7-deazaguanine biosynthesis. Its function is as follows. Catalyzes the ATP-dependent conversion of 7-carboxy-7-deazaguanine (CDG) to 7-cyano-7-deazaguanine (preQ(0)). This chain is 7-cyano-7-deazaguanine synthase, found in Escherichia fergusonii (strain ATCC 35469 / DSM 13698 / CCUG 18766 / IAM 14443 / JCM 21226 / LMG 7866 / NBRC 102419 / NCTC 12128 / CDC 0568-73).